We begin with the raw amino-acid sequence, 371 residues long: UDP-N-acetylglucosamine--N-acetylmuramyl-(pentapeptide) pyrophosphoryl-undecaprenol N-acetylglucosamine transferase (371 aa).

UDP-N-acetyl-alpha-D-glucosamine is bound by residues 10 to 12 (TGG), Asn-124, Arg-166, Ser-196, and Gln-301.

Belongs to the glycosyltransferase 28 family. MurG subfamily.

It localises to the cell membrane. It catalyses the reaction di-trans,octa-cis-undecaprenyl diphospho-N-acetyl-alpha-D-muramoyl-L-alanyl-D-glutamyl-meso-2,6-diaminopimeloyl-D-alanyl-D-alanine + UDP-N-acetyl-alpha-D-glucosamine = di-trans,octa-cis-undecaprenyl diphospho-[N-acetyl-alpha-D-glucosaminyl-(1-&gt;4)]-N-acetyl-alpha-D-muramoyl-L-alanyl-D-glutamyl-meso-2,6-diaminopimeloyl-D-alanyl-D-alanine + UDP + H(+). The protein operates within cell wall biogenesis; peptidoglycan biosynthesis. In terms of biological role, cell wall formation. Catalyzes the transfer of a GlcNAc subunit on undecaprenyl-pyrophosphoryl-MurNAc-pentapeptide (lipid intermediate I) to form undecaprenyl-pyrophosphoryl-MurNAc-(pentapeptide)GlcNAc (lipid intermediate II). The polypeptide is UDP-N-acetylglucosamine--N-acetylmuramyl-(pentapeptide) pyrophosphoryl-undecaprenol N-acetylglucosamine transferase (Moorella thermoacetica (strain ATCC 39073 / JCM 9320)).